A 354-amino-acid polypeptide reads, in one-letter code: GDSL esterase/lipase At3g09930 (354 aa).

Residues 1–24 (MELPKLLISLFLFSFSSFFLGAES) form the signal peptide. Serine 46 (nucleophile) is an active-site residue. 5 N-linked (GlcNAc...) asparagine glycosylation sites follow: asparagine 133, asparagine 233, asparagine 237, asparagine 256, and asparagine 300. Catalysis depends on residues aspartate 329 and histidine 332.

The protein belongs to the 'GDSL' lipolytic enzyme family.

Its subcellular location is the secreted. This chain is GDSL esterase/lipase At3g09930, found in Arabidopsis thaliana (Mouse-ear cress).